A 635-amino-acid chain; its full sequence is 1-deoxy-D-xylulose-5-phosphate synthase (635 aa).

Residues H72 and 113 to 115 (GHA) contribute to the thiamine diphosphate site. D144 contacts Mg(2+). Thiamine diphosphate is bound by residues 145–146 (GA), N174, Y287, and E370. N174 is a binding site for Mg(2+).

Belongs to the transketolase family. DXPS subfamily. As to quaternary structure, homodimer. Mg(2+) serves as cofactor. It depends on thiamine diphosphate as a cofactor.

The enzyme catalyses D-glyceraldehyde 3-phosphate + pyruvate + H(+) = 1-deoxy-D-xylulose 5-phosphate + CO2. Its pathway is metabolic intermediate biosynthesis; 1-deoxy-D-xylulose 5-phosphate biosynthesis; 1-deoxy-D-xylulose 5-phosphate from D-glyceraldehyde 3-phosphate and pyruvate: step 1/1. Functionally, catalyzes the acyloin condensation reaction between C atoms 2 and 3 of pyruvate and glyceraldehyde 3-phosphate to yield 1-deoxy-D-xylulose-5-phosphate (DXP). This Trichodesmium erythraeum (strain IMS101) protein is 1-deoxy-D-xylulose-5-phosphate synthase.